The sequence spans 382 residues: RIB43A-like with coiled-coils protein 2 (382 aa).

Residues 222–255 are a coiled coil; sequence NKSQAIESVERKKQEKKQEQEDNLAEITNLLRGD.

This sequence belongs to the RIB43A family. Microtubule inner protein component of sperm flagellar doublet microtubules. Expressed in airway epithelial cells.

It localises to the cytoplasm. The protein resides in the cytoskeleton. The protein localises to the cilium axoneme. It is found in the flagellum axoneme. Its function is as follows. Microtubule inner protein (MIP) part of the dynein-decorated doublet microtubules (DMTs) in cilia axoneme, which is required for motile cilia beating. The protein is RIB43A-like with coiled-coils protein 2 of Homo sapiens (Human).